Reading from the N-terminus, the 1249-residue chain is Minor capsid protein M1249L (1249 aa).

This sequence belongs to the asfivirus M1249L family. Interacts with the minor capsid protein p17 and with the hexon capsid protein p72 capsomers; these interactions form a rigid zipper structure that stabilizes the capsomers. Interacts with host IRF3.

The protein resides in the virion. Its subcellular location is the host cytoplasm. In terms of biological role, together with the penton and the other minor capsid proteins (p17, p49), forms a complicated network immediately below the outer capsid shell, stabilizing the whole capsid. In addition, blocks IFN-beta transactivation mediated by the cGAS-STING pathway and regulates the transcriptional activity of IFN-beta. Mechanistically, suppresses the phosphorylation of host key adapter protein TBK1 and degrades host IRF3 in the cytoplasm. This chain is Minor capsid protein M1249L, found in African swine fever virus (isolate Tick/South Africa/Pretoriuskop Pr4/1996) (ASFV).